Consider the following 123-residue polypeptide: Ig heavy chain V region HPCG14 (123 aa).

The region spanning 1–114 (EVKLVESGGG…GYDYWFDVWG (114 aa)) is the Ig-like domain.

The protein is Ig heavy chain V region HPCG14 of Mus musculus (Mouse).